The following is an 86-amino-acid chain: Toxin ICK-18 (86 aa).

The first 19 residues, 1–19 (MKTIFALVFCCAIAVVVLG), serve as a signal peptide directing secretion. Cystine bridges form between Cys-35–Cys-49, Cys-42–Cys-61, Cys-48–Cys-76, and Cys-79–Cys-86.

It belongs to the neurotoxin 21 family. As to expression, expressed by the venom gland.

It is found in the secreted. In terms of biological role, probable neurotoxin with ion channel impairing activity. The protein is Toxin ICK-18 of Trittame loki (Brush-footed trapdoor spider).